The sequence spans 483 residues: Altronate oxidoreductase (483 aa).

Residue Ile18 to Ala29 coordinates NAD(+).

The protein belongs to the mannitol dehydrogenase family. UxaB subfamily.

The catalysed reaction is D-altronate + NAD(+) = keto-D-tagaturonate + NADH + H(+). It participates in carbohydrate metabolism; pentose and glucuronate interconversion. This chain is Altronate oxidoreductase, found in Escherichia coli O7:K1 (strain IAI39 / ExPEC).